A 75-amino-acid chain; its full sequence is UPF0154 protein MMOB4450 (75 aa).

A helical membrane pass occupies residues 7 to 27 (IGLIVGLSILFTIVGLVVGFF).

The protein belongs to the UPF0154 family.

It is found in the cell membrane. In Mycoplasma mobile (strain ATCC 43663 / 163K / NCTC 11711) (Mesomycoplasma mobile), this protein is UPF0154 protein MMOB4450.